A 178-amino-acid polypeptide reads, in one-letter code: Actin-related protein 2/3 complex subunit 3-A (178 aa).

This sequence belongs to the ARPC3 family. Component of the Arp2/3 complex composed of actr2/arp2, actr3/arp3, arpc1 (arpc1a or arpc1b), arpc2, arpc3, arpc4 and arpc5.

The protein localises to the cytoplasm. Its subcellular location is the cytoskeleton. The protein resides in the cell projection. It is found in the nucleus. Component of the Arp2/3 complex, a multiprotein complex that mediates actin polymerization upon stimulation by nucleation-promoting factor (NPF). The Arp2/3 complex mediates the formation of branched actin networks in the cytoplasm, providing the force for cell motility. In addition to its role in the cytoplasmic cytoskeleton, the Arp2/3 complex also promotes actin polymerization in the nucleus, thereby regulating gene transcription and repair of damaged DNA. The Arp2/3 complex promotes homologous recombination (HR) repair in response to DNA damage by promoting nuclear actin polymerization, leading to drive motility of double-strand breaks (DSBs). The polypeptide is Actin-related protein 2/3 complex subunit 3-A (arpc3-a) (Xenopus laevis (African clawed frog)).